Consider the following 104-residue polypeptide: Membrane magnesium transporter (104 aa).

The Cytoplasmic segment spans residues 1–2; that stretch reads MN. Residues 3–23 form a helical membrane-spanning segment; that stretch reads LGFLVGVFGVLILSHAAYSTI. Residues 24–40 lie on the Lumenal side of the membrane; the sequence is QYRGLLKIMEEEFSRPP. Residues 41 to 61 form a helical membrane-spanning segment; sequence INVILELIIGLALCMWAALTF. Topologically, residues 62–104 are cytoplasmic; it reads PGKFLSIHPDSDENRAVFLPDNSDFMIFNHRGRLFPPQIDMKF.

The protein belongs to the membrane magnesium transporter (TC 1.A.67) family. In terms of assembly, component of the ER membrane protein complex (EMC).

It is found in the endoplasmic reticulum membrane. The protein localises to the golgi apparatus membrane. The protein resides in the early endosome membrane. Mediates Mg(2+) transport. In Arabidopsis thaliana (Mouse-ear cress), this protein is Membrane magnesium transporter.